The primary structure comprises 430 residues: C4-dicarboxylate transport protein (430 aa).

8 helical membrane-spanning segments follow: residues 9-29 (VLYV…HFYP), 45-65 (LIKM…IAGM), 79-99 (LLYF…ATHL), 149-169 (GEIL…AHLG), 185-205 (VLFG…FGAM), 223-243 (LIGT…GAIA), 308-328 (IYMT…LTWM), and 356-376 (AATL…ILGI).

Belongs to the dicarboxylate/amino acid:cation symporter (DAACS) (TC 2.A.23) family.

It localises to the cell inner membrane. Responsible for the transport of dicarboxylates such as succinate, fumarate, and malate from the periplasm across the membrane. In Burkholderia orbicola (strain AU 1054), this protein is C4-dicarboxylate transport protein.